The chain runs to 608 residues: Threonine--tRNA ligase (608 aa).

The interval 1–143 is editing domain; that stretch reads MRVLYIHAER…VFKPEEAKTE (143 aa). 2 catalytic regions span residues 194–490 and 195–490; these read PKYL…PRLP and KYLD…PRLP. Zn(2+) contacts are provided by C287, H338, and H459.

Belongs to the class-II aminoacyl-tRNA synthetase family. In terms of assembly, homodimer. Zn(2+) is required as a cofactor.

The protein resides in the cytoplasm. The catalysed reaction is tRNA(Thr) + L-threonine + ATP = L-threonyl-tRNA(Thr) + AMP + diphosphate + H(+). Catalyzes the attachment of threonine to tRNA(Thr) in a two-step reaction: L-threonine is first activated by ATP to form Thr-AMP and then transferred to the acceptor end of tRNA(Thr). Also edits incorrectly charged L-seryl-tRNA(Thr). The sequence is that of Threonine--tRNA ligase from Pyrobaculum arsenaticum (strain DSM 13514 / JCM 11321 / PZ6).